The primary structure comprises 316 residues: Lipoyl synthase (316 aa).

[4Fe-4S] cluster contacts are provided by Cys61, Cys66, Cys72, Cys87, Cys91, Cys94, and Ser301. In terms of domain architecture, Radical SAM core spans 73 to 290 (FGKGTATFMI…ERAAIEMGFS (218 aa)).

It belongs to the radical SAM superfamily. Lipoyl synthase family. [4Fe-4S] cluster serves as cofactor.

It localises to the cytoplasm. It catalyses the reaction [[Fe-S] cluster scaffold protein carrying a second [4Fe-4S](2+) cluster] + N(6)-octanoyl-L-lysyl-[protein] + 2 oxidized [2Fe-2S]-[ferredoxin] + 2 S-adenosyl-L-methionine + 4 H(+) = [[Fe-S] cluster scaffold protein] + N(6)-[(R)-dihydrolipoyl]-L-lysyl-[protein] + 4 Fe(3+) + 2 hydrogen sulfide + 2 5'-deoxyadenosine + 2 L-methionine + 2 reduced [2Fe-2S]-[ferredoxin]. It participates in protein modification; protein lipoylation via endogenous pathway; protein N(6)-(lipoyl)lysine from octanoyl-[acyl-carrier-protein]: step 2/2. Its function is as follows. Catalyzes the radical-mediated insertion of two sulfur atoms into the C-6 and C-8 positions of the octanoyl moiety bound to the lipoyl domains of lipoate-dependent enzymes, thereby converting the octanoylated domains into lipoylated derivatives. The sequence is that of Lipoyl synthase from Nitrosospira multiformis (strain ATCC 25196 / NCIMB 11849 / C 71).